The sequence spans 428 residues: MGLNTAIATRVNGTPPPEVPIADIELGSLDFWALDDDVRDGAFATLRREAPISFWPTIELPGFVAGNGHWALTKYDDVFYASRHPDIFSSYPNITINDQTPELAEYFGSMIVLDDPRHQRLRSIVSRAFTPKVVARIEAAVRDRAHRLVSSMIANNPDRQADLVSELAGPLPLQIICDMMGIPKADHQRIFHWTNVILGFGDPDLATDFDEFMQVSADIGAYATALAEDRRVNHHDDLTSSLVEAEVDGERLSSREIASFFILLVVAGNETTRNAITHGVLALSRYPEQRDRWWSDFDGLAPTAVEEIVRWASPVVYMRRTLTQDIELRGTKMAAGDKVSLWYCSANRDESKFADPWTFDLARNPNPHLGFGGGGAHFCLGANLARREIRVAFDELRRQMPDVVATEEPARLLSQFIHGIKTLPVTWS.

Cys379 contacts heme.

This sequence belongs to the cytochrome P450 family. Heme serves as cofactor.

The enzyme catalyses a methyl-branched lipid + O2 + 2 reduced ferredoxin [iron-sulfur] cluster + 2 H(+) = an omega-hydroxy-methyl-branched lipid + H2O + 2 oxidized ferredoxin [iron-sulfur] cluster.. It carries out the reaction cholest-4-en-3-one + 6 reduced [2Fe-2S]-[ferredoxin] + 3 O2 + 5 H(+) = (25R)-3-oxocholest-4-en-26-oate + 6 oxidized [2Fe-2S]-[ferredoxin] + 4 H2O. Its pathway is lipid metabolism; branched-chain fatty acid metabolism. In terms of biological role, primarily hydroxylates the omega-carbon of a number of methyl-branched lipids, including (2E,6E)-farnesol, phytanate, geranylgeraniol, 15-methylpalmitate and (2E,6E)-farnesyl diphosphate. Also catalyzes the sequential oxidation of the terminal methyl of cholest-4-en-3-one into (25R)-26-hydroxycholest-4-en-3-one (alcohol), (25R)-26-oxocholest-4-en-3-one (aldehyde), to finally yield the carboxylic acid (25R)-3-oxocholest-4-en-26-oate. Also able to sequentially oxidize cholesterol itself, not only cholest-4-en-3-one. This chain is Methyl-branched lipid omega-hydroxylase (cyp124), found in Mycobacterium bovis (strain ATCC BAA-935 / AF2122/97).